A 2241-amino-acid polypeptide reads, in one-letter code: MKVTQASCHQGDIARFGARAGNQCVCNGIMFLHALHLGGTSAVLQTEALDAIMEEGARLDARLERELQKKLPAGGRLPVYRLGDEVPRRLESRFGRTVHALSRPFNGTTETCDLDGYMCPGIFDFLRYAHAKPRPTYVLVTVNSLARAVVFTEDHMLVFDPHSSAECHNAAVYHCEGLHQVLMVLTGFGVQLSPAFYYEALFLYMLDVATVPEAEIAARLVSTYRDRDIDLTGVVRESADTAATTTTAAPSLPPLPDPIVDPGCPPGVAPSIPVYDPSSSPKKTPEKRRKDLSGSKHGGKKKPPSTTSKTLATASSSPSAIAAASSSSAVPPSYSCGEGALPALGRYQQLVDEVEQELKALTLPPLPANTSAWTLHAAGTESGANAATATAPSFDEAFLTDRLQQLIIHAVNQRSCLRRPCGPQSAAQQAVRAYLGLSKKLDAFLLNWLHHGLDLQRMHDYLSHKTTKGTYSTLDRALLEKMQVVFDPYGRQHGPALIAWVEEMLRYVESKPTNELSQRLQRFVTKRPMPVSDSFVCLRPVDFQRLTQVIEQRRRVLQRQREEYHGVYEHLAGLITSIDIHDLDASDLNRREILKALQPLDDNAKQELFRLGNAKMLELQMDLDRLSTQLLTRVHNHILNGFLPVEDLKQMERVVEQVLRLFYDLRDLKLCDGSYEEGFVVIREQLSYLMTGTVRDNVPLLQEILQLRHAYQQATQQNEGRLTQIHDLLHVIETLVRDPGSRGSALTLALVQEQLAQLEALGGLQLPEVQQRLQNAQLALSRLYEEEEETQRFLDGLSYDDPPTEQTIKRHPQLREMLRRDEQTRLRLINAVLSMFHTLVMRLARDESPRPTFFDAVSLLLQQLPPDSHEREDLRAANATYAQMVKKLEQIEKAGTGASEKRFQALRELVYFFRNHEYFFQHMVGRLGVGPQVTELYERYQHEMEEQHLERLEREWQEEAGKLTVTSVEDVQRVLARAPSHRVMHQMQQTLTTKMQDFLDKEKRKQEEQQRQLLDGYQKKVQQDLQRVVDAVKGEMLSTIPHQPLEATLELLLGLDQRAQPLLDKFNQDLLSALQQLSKKLDGRINECLHGVLTGDVERRCHPHREAAMQTQASLNHLDQILGPQLLIHETQQALQHAVHQAQFIEKCQQGDPTTAITGSEFESDFARYRSSQQKMEGQLQETRQQMTETSERLDRSLRQDPGSSSVTRVPEKPFKGQELAGRITPPPADFQRPVFKTLLDQQADAARKALSDEADLLNQKVQTQLRQRDEQLSTAQNLWTDLVTRHKMSGGLDVTTPDAKALMEKPLETLRELLGKATQQLPYLSAERTVRWMLAFLEEALAQITADPTHPHHGSRTHYRNLQQQAVESAVTLAHQIEQNAACENFIAQHQEATANGASTPRVDMVQAVEAVWQRLEPGRVAGGAARHQKVQELLQRLGQTLGDLELQETLATEYFALLHGIQTFSYGLDFRSQLEKIRDLRTRFAELAKRCGTRLSNEGALPNPRKPQATTSLGAFTRGLNALERHVQLGHQYLLNKLNGSSLVYRLEDIPSVLPPTHETDPALIMRDRLRRLCFARHHDTFLEVVDVFGMRQIVTQAGEPIYLVTDYGNVAFKYLALRDDGRPLAWRRRCSGGGLKNVVTTRYKAITVAVAVCQTLRTFWPQISQYDLRPYLTQHQSHTHPAETHTLHNLKLFCYLVSTAWHQRIDTQQELTAADRVGSGEGGDVGEQRPGRGTVLRLSLQEFCVLIAALYPEYIYTVLKYPVQMSLPSLTAHLHQDVIHAVVNNTHKMPPDHLPEQVKAFCITPTQWPAMQLNKLFWENKLVQQLCQVGPQKSTPSLGKLWLYAMATLVFPQDMLQCLWLELKPQYAETYASVSELVQTLFQIFTQQCEMVTEGYTQPQLPTGEPVLQMIRVRRQDTTTTDTNTTTEPGLLDVFIQTETALDYALGSWLFGIPVCLGVHVADLLKGQRVLVARHLEYTSRDRDFLRIQRSRDLNLSQLLQDTWTETPLEHCWLQAQIRRLRDYLRFPTRLEFIPLVIYNAQDHTVVRVLRPPSTFEQDHSRLVLDEAFPTFPLYDQDDNTSADNVAASGAAPTPPVPFNRVPVNIQFLRENPPPIARVQQPPRRHRHRAAAAADDDGQIDHAQDDTSRTADSALVSTAFGGSVFQENRLGETPLCRDELVAVAPGAASTSFASPPITVLTQNVLSALEILRLVRLDLRQLAQSVQDTIQHMRFLYLL.

The interval 1–238 is deubiquitination activity; it reads MKVTQASCHQ…IDLTGVVRES (238 aa). Residues 4–226 form the Peptidase C76 domain; it reads TQASCHQGDI…AARLVSTYRD (223 aa). Catalysis depends on residues Cys24, Asp160, and His162. Residues 239–314 are disordered; it reads ADTAATTTTA…STTSKTLATA (76 aa). The span at 240–250 shows a compositional bias: low complexity; it reads DTAATTTTAAP. A compositionally biased stretch (pro residues) spans 251 to 268; that stretch reads SLPPLPDPIVDPGCPPGV. Positions 304 to 314 are enriched in low complexity; it reads PSTTSKTLATA. The interaction with inner tegument protein stretch occupies residues 327–331; that stretch reads SSAVP. Disordered stretches follow at residues 1187-1230 and 2118-2152; these read MTET…PPAD and PIARVQQPPRRHRHRAAAAADDDGQIDHAQDDTSR. Composition is skewed to basic and acidic residues over residues 1190 to 1199 and 2142 to 2152; these read TSERLDRSLR and QIDHAQDDTSR.

Belongs to the herpesviridae large tegument protein family. As to quaternary structure, interacts with host CUL1 and CUL4A; these interactions inhibit the E3 ligase activity of cullins. Interacts with inner tegument protein. Interacts with capsid vertex specific component CVC2. Interacts with the major capsid protein/MCP.

It localises to the virion tegument. Its subcellular location is the host cytoplasm. It is found in the host nucleus. The catalysed reaction is Thiol-dependent hydrolysis of ester, thioester, amide, peptide and isopeptide bonds formed by the C-terminal Gly of ubiquitin (a 76-residue protein attached to proteins as an intracellular targeting signal).. In terms of biological role, large tegument protein that plays multiple roles in the viral cycle. During viral entry, remains associated with the capsid while most of the tegument is detached and participates in the capsid transport toward the host nucleus. Plays a role in the routing of the capsid at the nuclear pore complex and subsequent uncoating. Within the host nucleus, acts as a deneddylase and promotes the degradation of nuclear CRLs (cullin-RING ubiquitin ligases) and thereby stabilizes nuclear CRL substrates, while cytoplasmic CRLs remain unaffected. These modifications prevent host cell cycle S-phase progression and create a favorable environment allowing efficient viral genome replication. Participates later in the secondary envelopment of capsids. Indeed, plays a linker role for the association of the outer viral tegument to the capsids together with the inner tegument protein. The protein is Large tegument protein deneddylase (UL48) of Homo sapiens (Human).